A 444-amino-acid polypeptide reads, in one-letter code: Transcription factor PIF5 (444 aa).

The segment at 26 to 39 (EDELVELLWRDGQV) is involved in interaction with phyB. Disordered stretches follow at residues 154–265 (HCGS…NLSE) and 416–444 (MLGF…GKIG). The segment covering 155–171 (CGSNQSTNIHQATTLPV) has biased composition (polar residues). A compositionally biased stretch (basic and acidic residues) spans 175-185 (DRSKNVEERLD). Over residues 187–197 (SSGGSSGCSYG) the composition is skewed to low complexity. Residues 224 to 244 (ESVSQSDIGLTSTDDQTMGNK) are compositionally biased toward polar residues. Residues 256–265 (RAAEVHNLSE) show a composition bias toward basic and acidic residues. Residues 256 to 305 (RAAEVHNLSERRRRDRINERMKALQELIPHCSRTDKASILDEAIDYLKSL) form the bHLH domain. A compositionally biased stretch (polar residues) spans 424-437 (GPQSQLSAPATTDS). Residue Ser437 is modified to Phosphoserine.

As to quaternary structure, homodimer. Interacts specifically with the Pfr form of phytochrome B and with TOC1/APRR1. May form a heterodimer with PIF3. Interacts with PHYB, CRY1 and CRY2 in the nucleus in response to low blue light (LBL). Interacts with TOPP4. Associates to PTAC12/HMR/PAP5 which acts as a transcriptional coactivator. Post-translationally, phosphorylated. Additional phosphorylations induced within 60 seconds following phytochrome B photoactivation. In terms of processing, dephosphorylated by TOPP4 during photomorphogenesis, leading to subsequent degradation of PIF5 by the proteasomal pathway. Mainly expressed in leaves and seedlings, and, to a lower extent, in stems, fruits, flowers and roots.

The protein localises to the nucleus. In terms of biological role, transcription factor acting negatively in the phytochrome B signaling pathway to promote the shade-avoidance response. Regulates PHYB abundance at the post-transcriptional level, possibly via the ubiquitin-proteasome pathway. Promotes ethylene activity in the dark. May regulate the expression of a subset of genes by binding to the G-box motif. Might be involved in the integration of light-signals to control both circadian and photomorphogenic processes. Activated by CRY1 and CRY2 in response to low blue light (LBL) by direct binding at chromatin on E-box variant 5'-CA[CT]GTG-3' to stimulate specific gene expression to adapt global physiology (e.g. hypocotyl elongation in low blue light). The sequence is that of Transcription factor PIF5 from Arabidopsis thaliana (Mouse-ear cress).